The following is a 1624-amino-acid chain: Putative serine/threonine-protein kinase/receptor R831 (1624 aa).

The first 25 residues, 1–25 (MHSVYTKYTIILILLVIYQGLPTNT), serve as a signal peptide directing secretion. Asn-152, Asn-169, Asn-200, Asn-205, Asn-225, Asn-240, Asn-245, Asn-292, Asn-364, Asn-479, Asn-541, Asn-720, and Asn-737 each carry an N-linked (GlcNAc...) asparagine; by host glycan. A helical transmembrane segment spans residues 747-767 (VIPIACIFGLLLLTLLIVIIF). Residues 786–1049 (LEIGETLGTG…EIMTRLSNIL (264 aa)) form the Protein kinase 1 domain. ATP contacts are provided by residues 792-800 (LGTGGYGEV) and Lys-813. Asp-908 (proton acceptor) is an active-site residue. Residues 1054 to 1093 (NMTSGTSSSSLSSGGIGKSITDSKSSNSRSSVESSNTSNT) show a composition bias toward low complexity. The disordered stretch occupies residues 1054 to 1101 (NMTSGTSSSSLSSGGIGKSITDSKSSNSRSSVESSNTSNTFRGIDRHN). Residues 1109-1252 (TVAFIDIISA…STVNITGKIT (144 aa)) enclose the Guanylate cyclase domain. Residues 1364 to 1615 (ISIGKQIGLG…MTEVVQQLML (252 aa)) enclose the Protein kinase 2 domain. ATP-binding positions include 1370-1378 (IGLGSYGIV) and Lys-1391. The active-site Proton acceptor is the Asp-1487.

The protein resides in the membrane. The catalysed reaction is L-seryl-[protein] + ATP = O-phospho-L-seryl-[protein] + ADP + H(+). It carries out the reaction L-threonyl-[protein] + ATP = O-phospho-L-threonyl-[protein] + ADP + H(+). In Acanthamoeba polyphaga (Amoeba), this protein is Putative serine/threonine-protein kinase/receptor R831.